A 310-amino-acid polypeptide reads, in one-letter code: N-acetyl-gamma-glutamyl-phosphate reductase (310 aa).

Cys117 is a catalytic residue.

This sequence belongs to the NAGSA dehydrogenase family. Type 2 subfamily.

It is found in the cytoplasm. The enzyme catalyses N-acetyl-L-glutamate 5-semialdehyde + phosphate + NADP(+) = N-acetyl-L-glutamyl 5-phosphate + NADPH + H(+). It functions in the pathway amino-acid biosynthesis; L-arginine biosynthesis; N(2)-acetyl-L-ornithine from L-glutamate: step 3/4. In terms of biological role, catalyzes the NADPH-dependent reduction of N-acetyl-5-glutamyl phosphate to yield N-acetyl-L-glutamate 5-semialdehyde. This is N-acetyl-gamma-glutamyl-phosphate reductase from Rhizobium johnstonii (strain DSM 114642 / LMG 32736 / 3841) (Rhizobium leguminosarum bv. viciae).